A 254-amino-acid chain; its full sequence is Proteasome subunit alpha type-4 (254 aa).

Residue Thr60 is modified to Phosphothreonine. The interval 235–254 is disordered; it reads QIEQEKQEQQEQDKKKKSNH. Residues 237-248 show a composition bias toward basic and acidic residues; sequence EQEKQEQQEQDK.

Belongs to the peptidase T1A family. In terms of assembly, the 26S proteasome consists of a 20S proteasome core and two 19S regulatory subunits. The 20S proteasome core is composed of 28 subunits that are arranged in four stacked rings, resulting in a barrel-shaped structure. The two end rings are each formed by seven alpha subunits, and the two central rings are each formed by seven beta subunits. The catalytic chamber with the active sites is on the inside of the barrel. Interacts with CIC1.

It localises to the cytoplasm. The protein localises to the nucleus. In terms of biological role, the proteasome degrades poly-ubiquitinated proteins in the cytoplasm and in the nucleus. It is essential for the regulated turnover of proteins and for the removal of misfolded proteins. The proteasome is a multicatalytic proteinase complex that is characterized by its ability to cleave peptides with Arg, Phe, Tyr, Leu, and Glu adjacent to the leaving group at neutral or slightly basic pH. It has an ATP-dependent proteolytic activity. The polypeptide is Proteasome subunit alpha type-4 (PRE6) (Saccharomyces cerevisiae (strain ATCC 204508 / S288c) (Baker's yeast)).